The chain runs to 852 residues: Bifunctional heparan sulfate N-deacetylase/N-sulfotransferase 1 (852 aa).

The Cytoplasmic segment spans residues 1–13; sequence MIITPYLNRKITR. The chain crosses the membrane as a helical; Signal-anchor for type II membrane protein span at residues 14 to 34; sequence PLKWILALIFLYLIYICLFSN. Residues 34-574 are heparan sulfate N-deacetylase 1; the sequence is NNSKPPKPRK…PRHHAILPPS (541 aa). Residues 35–852 are Lumenal-facing; it reads NSKPPKPRKK…WLEESVRIRA (818 aa). 7 N-linked (GlcNAc...) asparagine glycosylation sites follow: asparagine 50, asparagine 72, asparagine 261, asparagine 328, asparagine 377, asparagine 428, and asparagine 576. A heparan sulfate N-sulfotransferase 1 region spans residues 575–852; sequence INCTKKSLPD…WLEESVRIRA (278 aa). The active-site For sulfotransferase activity is the lysine 592. Residue 592–596 participates in 3'-phosphoadenylyl sulfate binding; sequence KTGST. N-linked (GlcNAc...) asparagine glycosylation is present at asparagine 607. Serine 686 is a binding site for 3'-phosphoadenylyl sulfate. The N-linked (GlcNAc...) asparagine glycan is linked to asparagine 712. Cysteine 789 and cysteine 798 are joined by a disulfide. Residue 803–807 coordinates 3'-phosphoadenylyl sulfate; the sequence is KGRKY.

The protein belongs to the sulfotransferase 1 family. NDST subfamily. Monomer. As to expression, present in some specific neurons in head and tail regions and muscles.

It localises to the golgi apparatus membrane. It catalyses the reaction alpha-D-glucosaminyl-[heparan sulfate](n) + 3'-phosphoadenylyl sulfate = N-sulfo-alpha-D-glucosaminyl-[heparan sulfate](n) + adenosine 3',5'-bisphosphate + 2 H(+). It functions in the pathway glycan metabolism; heparan sulfate biosynthesis. Its pathway is glycan metabolism; heparin biosynthesis. Essential bifunctional enzyme that catalyzes both the N-deacetylation and the N-sulfation of glucosamine (GlcNAc) of the glycosaminoglycan in heparan sulfate. Modifies the GlcNAc-GlcA disaccharide repeating sugar backbone to make N-sulfated heparosan, a prerequisite substrate for later modifications in heparin biosynthesis. The sequence is that of Bifunctional heparan sulfate N-deacetylase/N-sulfotransferase 1 (hst-1) from Caenorhabditis elegans.